Here is a 358-residue protein sequence, read N- to C-terminus: Putative KilA-N domain-containing protein 313L (358 aa).

Residues 15-124 (NFYYGLFGDF…DKCNQIVIDF (110 aa)) enclose the KilA-N domain. Residues 126–245 (VVEFKEKEKE…VKLEISVEDR (120 aa)) are a coiled coil.

The protein belongs to the IIV-6 006L/238R/313L/468L family.

The chain is Putative KilA-N domain-containing protein 313L from Acheta domesticus (House cricket).